The primary structure comprises 465 residues: Alpha-2A adrenergic receptor (465 aa).

At 1-48 (MFRQEQPLAEGSFAPMGSLQPDAGNSSWNGTEAPGGGTRATPYSLQVT) the chain is on the extracellular side. Residues asparagine 25 and asparagine 29 are each glycosylated (N-linked (GlcNAc...) asparagine). Residues 49 to 74 (LTLVCLAGLLMLFTVFGNVLVIIAVF) form a helical membrane-spanning segment. Over 75–85 (TSRALKAPQNL) the chain is Cytoplasmic. Residues 86–111 (FLVSLASADILVATLVIPFSLANEVM) traverse the membrane as a helical segment. The Extracellular segment spans residues 112–121 (GYWYFGKVWC). The cysteines at positions 121 and 203 are disulfide-linked. The helical transmembrane segment at 122-144 (EIYLALDVLFCTSSIVHLCAISL) threads the bilayer. Residues 145–164 (DRYWSITQAIEYNLKRTPRR) lie on the Cytoplasmic side of the membrane. A helical membrane pass occupies residues 165 to 188 (IKAIIVTVWVISAVISFPPLISIE). At 189-207 (KKGAGGGQQPAEPSCKIND) the chain is on the extracellular side. The chain crosses the membrane as a helical span at residues 208–232 (QKWYVISSSIGSFFAPCLIMILVYV). Residues 233–389 (RIYQIAKRRT…RQNREKRFTF (157 aa)) are Cytoplasmic-facing. The disordered stretch occupies residues 242-378 (TRVPPSRRGP…GGGAKASRWR (137 aa)). Residues 313-330 (SSEHAERPPGPRRPDRGP) are compositionally biased toward basic and acidic residues. Serine 346 is modified (phosphoserine). The span at 353 to 363 (GAAGPGASGSG) shows a compositional bias: gly residues. At arginine 368 the chain carries Omega-N-methylarginine. Residues 390 to 414 (VLAVVIGVFVVCWFPFFFTYTLIAV) form a helical membrane-spanning segment. The Extracellular segment spans residues 415 to 424 (GCPVPSQLFN). The helical transmembrane segment at 425 to 445 (FFFWFGYCNSSLNPVIYTIFN) threads the bilayer. The Cytoplasmic portion of the chain corresponds to 446-465 (HDFRRAFKKILCRGDRKRIV). Residue cysteine 457 is the site of S-palmitoyl cysteine attachment.

Belongs to the G-protein coupled receptor 1 family. Adrenergic receptor subfamily. ADRA2A sub-subfamily.

Its subcellular location is the cell membrane. Functionally, alpha-2 adrenergic receptors mediate the catecholamine-induced inhibition of adenylate cyclase through the action of G proteins. In Mus musculus (Mouse), this protein is Alpha-2A adrenergic receptor.